A 166-amino-acid polypeptide reads, in one-letter code: Peptidyl-prolyl cis-trans isomerase-like 1 (166 aa).

One can recognise a PPIase cyclophilin-type domain in the interval Gln10–Pro164. Cyclosporin A contacts are provided by residues His54–Gly65, Thr70–Gly71, Ala99–Gly104, Gly109–Phe113, Thr119, and Lys125. Ser149 carries the post-translational modification Phosphoserine.

Belongs to the cyclophilin-type PPIase family. PPIL1 subfamily. As to quaternary structure, identified in the spliceosome C complex. Interacts with SNW1/SKIP. Interacts with CDC40/PRP17; this interaction leads to CDC40 isomerization. Interacts with RBM22.

It localises to the nucleus. The catalysed reaction is [protein]-peptidylproline (omega=180) = [protein]-peptidylproline (omega=0). Its activity is regulated as follows. Inhibited by Cyclosporin A. In terms of biological role, involved in pre-mRNA splicing as component of the spliceosome. PPIases accelerate the folding of proteins. It catalyzes the cis-trans isomerization of proline imidic peptide bonds in oligopeptides. Catalyzes prolyl peptide bond isomerization in CDC40/PRP17. Plays an important role in embryonic brain development; this function is independent of its isomerase activity. The protein is Peptidyl-prolyl cis-trans isomerase-like 1 (Ppil1) of Mus musculus (Mouse).